We begin with the raw amino-acid sequence, 380 residues long: Succinyl-diaminopimelate desuccinylase (380 aa).

His70 contributes to the Zn(2+) binding site. Residue Asp72 is part of the active site. Asp104 contacts Zn(2+). Glu138 acts as the Proton acceptor in catalysis. Residues Glu139, Glu167, and His353 each coordinate Zn(2+).

The protein belongs to the peptidase M20A family. DapE subfamily. Homodimer. Zn(2+) is required as a cofactor. It depends on Co(2+) as a cofactor.

It carries out the reaction N-succinyl-(2S,6S)-2,6-diaminopimelate + H2O = (2S,6S)-2,6-diaminopimelate + succinate. It functions in the pathway amino-acid biosynthesis; L-lysine biosynthesis via DAP pathway; LL-2,6-diaminopimelate from (S)-tetrahydrodipicolinate (succinylase route): step 3/3. In terms of biological role, catalyzes the hydrolysis of N-succinyl-L,L-diaminopimelic acid (SDAP), forming succinate and LL-2,6-diaminopimelate (DAP), an intermediate involved in the bacterial biosynthesis of lysine and meso-diaminopimelic acid, an essential component of bacterial cell walls. The protein is Succinyl-diaminopimelate desuccinylase of Ectopseudomonas mendocina (strain ymp) (Pseudomonas mendocina).